A 270-amino-acid chain; its full sequence is Oxidoreductase NAD-binding domain-containing protein 1 (270 aa).

An FAD-binding FR-type domain is found at 20-123 (MELFSARVCD…VGGNFYFDPQ (104 aa)). 137–142 (GVGINP) lines the NAD(+) pocket.

The sequence is that of Oxidoreductase NAD-binding domain-containing protein 1 (oxnad1) from Danio rerio (Zebrafish).